The primary structure comprises 571 residues: Urease subunit alpha (571 aa).

Positions 132 to 571 (GAIDTHIHFI…LPMGQKYFLF (440 aa)) constitute a Urease domain. Ni(2+) contacts are provided by His-137, His-139, and Lys-220. Lys-220 bears the N6-carboxylysine mark. His-222 is a substrate binding site. 2 residues coordinate Ni(2+): His-249 and His-275. His-323 functions as the Proton donor in the catalytic mechanism. Asp-363 is a binding site for Ni(2+).

The protein belongs to the metallo-dependent hydrolases superfamily. Urease alpha subunit family. Heterotrimer of UreA (gamma), UreB (beta) and UreC (alpha) subunits. Three heterotrimers associate to form the active enzyme. The cofactor is Ni cation. Post-translationally, carboxylation allows a single lysine to coordinate two nickel ions.

Its subcellular location is the cytoplasm. The catalysed reaction is urea + 2 H2O + H(+) = hydrogencarbonate + 2 NH4(+). It functions in the pathway nitrogen metabolism; urea degradation; CO(2) and NH(3) from urea (urease route): step 1/1. This Corynebacterium urealyticum (strain ATCC 43042 / DSM 7109) protein is Urease subunit alpha.